A 332-amino-acid polypeptide reads, in one-letter code: L-lactate dehydrogenase A chain (332 aa).

NAD(+)-binding positions include G29–K57 and R99. Substrate is bound by residues R106, N138, and R169. An NAD(+)-binding site is contributed by N138. H193 serves as the catalytic Proton acceptor. T248 is a binding site for substrate.

Belongs to the LDH/MDH superfamily. LDH family. As to quaternary structure, homotetramer.

The protein localises to the cytoplasm. It catalyses the reaction (S)-lactate + NAD(+) = pyruvate + NADH + H(+). Its pathway is fermentation; pyruvate fermentation to lactate; (S)-lactate from pyruvate: step 1/1. Interconverts simultaneously and stereospecifically pyruvate and lactate with concomitant interconversion of NADH and NAD(+). This Eleginops maclovinus (Patagonian blennie) protein is L-lactate dehydrogenase A chain (ldha).